A 444-amino-acid polypeptide reads, in one-letter code: ATPase PAAT (444 aa).

Phosphoserine occurs at positions 177, 182, and 254. Residues S279–N300 are disordered. Over residues A280–T289 the composition is skewed to polar residues. Residue S302 is modified to Phosphoserine. The tract at residues P424–R444 is disordered. A compositionally biased stretch (basic and acidic residues) spans R431–R444.

As to quaternary structure, homodimer. Interacts with ABCB7, ABCB8/MITOSUR and ABCB10.

It localises to the cytoplasm. The protein resides in the mitochondrion. The catalysed reaction is ATP + H2O = ADP + phosphate + H(+). Its function is as follows. ATPase that regulates mitochondrial ABC transporters ABCB7, ABCB8/MITOSUR and ABCB10. Regulates mitochondrial ferric concentration and heme biosynthesis and plays a role in the maintenance of mitochondrial homeostasis and cell survival. The sequence is that of ATPase PAAT from Mus musculus (Mouse).